A 296-amino-acid chain; its full sequence is 4-hydroxybenzoate octaprenyltransferase (296 aa).

The next 8 helical transmembrane spans lie at P28–G48, L52–I72, A102–A122, Y146–A166, G169–Y189, V219–F239, L241–W261, and F275–L295.

This sequence belongs to the UbiA prenyltransferase family. The cofactor is Mg(2+).

It localises to the cell inner membrane. It carries out the reaction all-trans-octaprenyl diphosphate + 4-hydroxybenzoate = 4-hydroxy-3-(all-trans-octaprenyl)benzoate + diphosphate. It functions in the pathway cofactor biosynthesis; ubiquinone biosynthesis. Its function is as follows. Catalyzes the prenylation of para-hydroxybenzoate (PHB) with an all-trans polyprenyl group. Mediates the second step in the final reaction sequence of ubiquinone-8 (UQ-8) biosynthesis, which is the condensation of the polyisoprenoid side chain with PHB, generating the first membrane-bound Q intermediate 3-octaprenyl-4-hydroxybenzoate. The protein is 4-hydroxybenzoate octaprenyltransferase of Pseudomonas fluorescens (strain Pf0-1).